The primary structure comprises 412 residues: FAD-dependent monooxygenase nscC (412 aa).

The N-terminal stretch at Met-1–Ser-21 is a signal peptide. Positions 35 and 46 each coordinate FAD. Asn-92 carries N-linked (GlcNAc...) asparagine glycosylation. Residue Arg-119 participates in FAD binding. Asn-170 and Asn-231 each carry an N-linked (GlcNAc...) asparagine glycan. FAD-binding residues include Asp-326 and Gly-339.

Belongs to the paxM FAD-dependent monooxygenase family. FAD is required as a cofactor.

It participates in secondary metabolite biosynthesis. Its function is as follows. FAD-dependent monooxygenase; part of the gene cluster that mediates the biosynthesis of neosartoricin B, a prenylated anthracenone that probably exhibits T-cell antiproliferative activity, suggestive of a physiological role as an immunosuppressive agent. The non-reducing polyketide synthase nscA probably synthesizes and cyclizes the decaketide backbone. The hydrolase nscB then mediates the product release through hydrolysis followed by spontaneous decarboxylation. The prenyltransferase nscD catalyzes the addition of the dimethylallyl group to the aromatic C5. The FAD-dependent monooxygenase nscC is then responsible for the stereospecific hydroxylation at C2. Neosartoricin B can be converted into two additional compounds neosartoricins C and D. Neosartoricin C is a spirocyclic compound that is cyclized through the attack of C3 hydroxyl on C14, followed by dehydration. On the other hand, neosartoricin D is a further cyclized compound in which attack of C2 on C14 in neosartoricin C results in the formation of the acetal-containing dioxabicyclo-octanone ring. Both of these compounds are novel and possibly represent related metabolites of the gene cluster. The polypeptide is FAD-dependent monooxygenase nscC (Arthroderma otae (strain ATCC MYA-4605 / CBS 113480) (Microsporum canis)).